We begin with the raw amino-acid sequence, 191 residues long: Thymidylate kinase (191 aa).

7-14 (GVDGAGKS) contributes to the ATP binding site.

Belongs to the thymidylate kinase family.

The catalysed reaction is dTMP + ATP = dTDP + ADP. In terms of biological role, phosphorylation of dTMP to form dTDP in both de novo and salvage pathways of dTTP synthesis. This chain is Thymidylate kinase, found in Helicobacter pylori (strain P12).